We begin with the raw amino-acid sequence, 381 residues long: N-acetyldiaminopimelate deacetylase (381 aa).

Aspartate 71 is a catalytic residue. Residue glutamate 130 is the Proton acceptor of the active site.

Belongs to the peptidase M20A family. N-acetyldiaminopimelate deacetylase subfamily.

The catalysed reaction is N-acetyl-(2S,6S)-2,6-diaminopimelate + H2O = (2S,6S)-2,6-diaminopimelate + acetate. It functions in the pathway amino-acid biosynthesis; L-lysine biosynthesis via DAP pathway; LL-2,6-diaminopimelate from (S)-tetrahydrodipicolinate (acetylase route): step 3/3. Its function is as follows. Catalyzes the conversion of N-acetyl-diaminopimelate to diaminopimelate and acetate. This chain is N-acetyldiaminopimelate deacetylase, found in Ligilactobacillus salivarius (strain UCC118) (Lactobacillus salivarius).